The following is a 229-amino-acid chain: Cytidylate kinase (229 aa).

Residue 10–18 (GPAGSGKST) coordinates ATP.

This sequence belongs to the cytidylate kinase family. Type 1 subfamily.

The protein localises to the cytoplasm. It catalyses the reaction CMP + ATP = CDP + ADP. The enzyme catalyses dCMP + ATP = dCDP + ADP. The chain is Cytidylate kinase from Leptospira interrogans serogroup Icterohaemorrhagiae serovar Lai (strain 56601).